The chain runs to 167 residues: MALLNILQYPDERLHTVAKPVEQVDERIRKLVADMFETMYESRGIGLAATQVDVHERVVVMDLTEDRSEPRVFINPVIVEKDGETTYEEGCLSVPGIYDAVTRAERVKVEALNEKGEKFTLEADGLLAICVQHELDHLMGIVFVERLSQLKQGRIKTKLKKRQKHTI.

Cysteine 91 and histidine 133 together coordinate Fe cation. Glutamate 134 is an active-site residue. Histidine 137 lines the Fe cation pocket.

The protein belongs to the polypeptide deformylase family. The cofactor is Fe(2+).

The catalysed reaction is N-terminal N-formyl-L-methionyl-[peptide] + H2O = N-terminal L-methionyl-[peptide] + formate. Removes the formyl group from the N-terminal Met of newly synthesized proteins. Requires at least a dipeptide for an efficient rate of reaction. N-terminal L-methionine is a prerequisite for activity but the enzyme has broad specificity at other positions. In Neisseria gonorrhoeae (strain ATCC 700825 / FA 1090), this protein is Peptide deformylase.